A 650-amino-acid chain; its full sequence is Gamma-tubulin complex component 4 homolog (650 aa).

Ser-214 carries the phosphoserine modification. Thr-216 is subject to Phosphothreonine. Ser-218 is subject to Phosphoserine.

It belongs to the TUBGCP family.

Its subcellular location is the cytoplasm. It localises to the cytoskeleton. The protein localises to the microtubule organizing center. The protein resides in the centrosome. In terms of biological role, gamma-tubulin complex is necessary for microtubule nucleation at the centrosome. The sequence is that of Gamma-tubulin complex component 4 homolog (Grip75) from Drosophila melanogaster (Fruit fly).